A 389-amino-acid chain; its full sequence is tRNA-specific 2-thiouridylase MnmA (389 aa).

Residues 30–37 and Leu56 each bind ATP; that span reads GLSGGVDS. Cys117 functions as the Nucleophile in the catalytic mechanism. Cys117 and Cys216 are oxidised to a cystine. Gly142 serves as a coordination point for ATP. The interaction with tRNA stretch occupies residues 166 to 168; sequence KDQ. The Cysteine persulfide intermediate role is filled by Cys216. Positions 321–322 are interaction with tRNA; sequence RY.

The protein belongs to the MnmA/TRMU family.

The protein localises to the cytoplasm. It catalyses the reaction S-sulfanyl-L-cysteinyl-[protein] + uridine(34) in tRNA + AH2 + ATP = 2-thiouridine(34) in tRNA + L-cysteinyl-[protein] + A + AMP + diphosphate + H(+). Catalyzes the 2-thiolation of uridine at the wobble position (U34) of tRNA, leading to the formation of s(2)U34. This chain is tRNA-specific 2-thiouridylase MnmA, found in Synechococcus sp. (strain CC9902).